The following is a 182-amino-acid chain: DOMON domain-containing protein Y73F4A.1 (182 aa).

Residues 1–18 (MFVLAIVFAFVFIPSSSS) form the signal peptide. Residues 26–143 (ELVSMNWNVK…CLNWMVVPGG (118 aa)) enclose the DOMON domain. Asparagine 47 and asparagine 128 each carry an N-linked (GlcNAc...) asparagine glycan.

The protein resides in the secreted. The polypeptide is DOMON domain-containing protein Y73F4A.1 (Caenorhabditis elegans).